Here is a 142-residue protein sequence, read N- to C-terminus: MKLTAEDKHNVKAIWDHVKGHEEAIGAEALYRMFCCMPTTRIYFPAKDLSERSSYLHSHGKKVVGALTNAVAHIDDIDTAFSKLSDKHAEELMVDPANFPKLAHNILVVLGIHLKPHFTYSVHRSVDKFLSTVAYVLASKYR.

The 141-residue stretch at 2-142 (KLTAEDKHNV…VAYVLASKYR (141 aa)) folds into the Globin domain. Residue histidine 59 participates in O2 binding. Histidine 88 contributes to the heme b binding site.

Belongs to the globin family. Major hemoglobin is a heterotetramer of two alpha-1 chains and two beta-1 chains. Red blood cells.

In terms of biological role, involved in oxygen transport from the lung to the various peripheral tissues. This is Hemoglobin subunit alpha-1 from Pleurodeles waltl (Iberian ribbed newt).